A 352-amino-acid polypeptide reads, in one-letter code: SKP1-like protein 20 (352 aa).

An interaction with the F-box domain of F-box proteins region spans residues 108 to 167 (TSAADSLQLKPLVDLTSRALARIIEGKNPEEIREIFHLPDDLTEEEKLEPLKNSMDDPRI). Disordered stretches follow at residues 214–251 (KAVK…RSKQ) and 267–288 (LLSA…DIDD). The span at 216–230 (VKMSKGKKKKKKKKD) shows a compositional bias: basic residues. The span at 239–249 (IHDKESHDLRS) shows a compositional bias: basic and acidic residues.

The protein belongs to the SKP1 family. As to quaternary structure, part of a SCF (SKP1-cullin-F-box) protein ligase complex. In terms of tissue distribution, expressed in young seedlings, roots, leaves, floral stems, inflorescences, and siliques.

The protein localises to the nucleus. It participates in protein modification; protein ubiquitination. In terms of biological role, involved in ubiquitination and subsequent proteasomal degradation of target proteins. Together with CUL1, RBX1 and a F-box protein, it forms a SCF E3 ubiquitin ligase complex. The functional specificity of this complex depends on the type of F-box protein. In the SCF complex, it serves as an adapter that links the F-box protein to CUL1. The chain is SKP1-like protein 20 (ASK20) from Arabidopsis thaliana (Mouse-ear cress).